The primary structure comprises 295 residues: MTKPIPAASGTAPAALFGASDVRRLAEEIGVRPTKTLGQNFVIDGNTIRRIVAAADIHADETVLEVGPGLGSLTLGLLDAAKSVVAVEIDPVLAAKLPGTVQQWRPGAAKDFHLVLADAMKVTELPVEPTALVANLPYNVAVPVVLHLLQHFPSLRHGLVMVQDEVADRLAAGPGSKTYGVPSVKAAWYSSMRKAGVIGMNVFWPAPKIHSGLVAFTRREPPVTSATREQVFAVIDAAFAQRRKTLRAALAGWAGSAAEAEQCLLAAGVDPTARGEVIDIAAFARIAEARQDRQA.

Residues Asn40, Val42, Gly67, Glu88, Asp118, and Asn135 each contribute to the S-adenosyl-L-methionine site.

It belongs to the class I-like SAM-binding methyltransferase superfamily. rRNA adenine N(6)-methyltransferase family. RsmA subfamily.

The protein resides in the cytoplasm. It carries out the reaction adenosine(1518)/adenosine(1519) in 16S rRNA + 4 S-adenosyl-L-methionine = N(6)-dimethyladenosine(1518)/N(6)-dimethyladenosine(1519) in 16S rRNA + 4 S-adenosyl-L-homocysteine + 4 H(+). Its function is as follows. Specifically dimethylates two adjacent adenosines (A1518 and A1519) in the loop of a conserved hairpin near the 3'-end of 16S rRNA in the 30S particle. May play a critical role in biogenesis of 30S subunits. The sequence is that of Ribosomal RNA small subunit methyltransferase A from Arthrobacter sp. (strain FB24).